The primary structure comprises 363 residues: Histidinol-phosphate aminotransferase (363 aa).

Lys-218 is modified (N6-(pyridoxal phosphate)lysine).

It belongs to the class-II pyridoxal-phosphate-dependent aminotransferase family. Histidinol-phosphate aminotransferase subfamily. As to quaternary structure, homodimer. The cofactor is pyridoxal 5'-phosphate.

The enzyme catalyses L-histidinol phosphate + 2-oxoglutarate = 3-(imidazol-4-yl)-2-oxopropyl phosphate + L-glutamate. It participates in amino-acid biosynthesis; L-histidine biosynthesis; L-histidine from 5-phospho-alpha-D-ribose 1-diphosphate: step 7/9. The sequence is that of Histidinol-phosphate aminotransferase from Xanthomonas euvesicatoria pv. vesicatoria (strain 85-10) (Xanthomonas campestris pv. vesicatoria).